Here is a 127-residue protein sequence, read N- to C-terminus: uncharacterized protein (127 aa).

Belongs to the transcriptional regulatory CopG/NikR family.

This is an uncharacterized protein from Methanocaldococcus jannaschii (strain ATCC 43067 / DSM 2661 / JAL-1 / JCM 10045 / NBRC 100440) (Methanococcus jannaschii).